The primary structure comprises 190 residues: Elongation factor P (190 aa).

The residue at position 34 (Lys34) is an N6-(3,6-diaminohexanoyl)-5-hydroxylysine.

It belongs to the elongation factor P family. Post-translationally, may be beta-lysylated on the epsilon-amino group of Lys-34 by the combined action of EpmA and EpmB, and then hydroxylated on the C5 position of the same residue by EpmC (if this protein is present). Lysylation is critical for the stimulatory effect of EF-P on peptide-bond formation. The lysylation moiety may extend toward the peptidyltransferase center and stabilize the terminal 3-CCA end of the tRNA. Hydroxylation of the C5 position on Lys-34 may allow additional potential stabilizing hydrogen-bond interactions with the P-tRNA.

The protein localises to the cytoplasm. The protein operates within protein biosynthesis; polypeptide chain elongation. Functionally, involved in peptide bond synthesis. Alleviates ribosome stalling that occurs when 3 or more consecutive Pro residues or the sequence PPG is present in a protein, possibly by augmenting the peptidyl transferase activity of the ribosome. Modification of Lys-34 is required for alleviation. This Psychrobacter arcticus (strain DSM 17307 / VKM B-2377 / 273-4) protein is Elongation factor P.